The following is a 118-amino-acid chain: MSQQIKIKVSDKVEGIVERDIQNNVANRRELYIKLFHIGSGTPSRKELVKAIASTFSTAEDLVVVKKVFTNYGSGISYARVNVYKDKDSLQKLEPQYLIGRDTGQKIKKGGKSAQKQQ.

This sequence belongs to the eukaryotic ribosomal protein eS24 family.

The sequence is that of Small ribosomal subunit protein eS24 from Sulfolobus acidocaldarius (strain ATCC 33909 / DSM 639 / JCM 8929 / NBRC 15157 / NCIMB 11770).